The chain runs to 86 residues: Small ribosomal subunit protein uS17 (86 aa).

Belongs to the universal ribosomal protein uS17 family. Part of the 30S ribosomal subunit.

Its function is as follows. One of the primary rRNA binding proteins, it binds specifically to the 5'-end of 16S ribosomal RNA. This is Small ribosomal subunit protein uS17 from Rhizorhabdus wittichii (strain DSM 6014 / CCUG 31198 / JCM 15750 / NBRC 105917 / EY 4224 / RW1) (Sphingomonas wittichii).